The chain runs to 1054 residues: CCAAT/enhancer-binding protein zeta (1054 aa).

Residues methionine 1–glutamate 20 show a composition bias toward basic and acidic residues. Disordered stretches follow at residues methionine 1–leucine 42 and valine 102–lysine 160. Over residues alanine 21–serine 34 the composition is skewed to acidic residues. The span at glutamate 109–isoleucine 120 shows a compositional bias: basic and acidic residues. Serine 113 is modified (phosphoserine). Polar residues predominate over residues asparagine 124–lysine 138. The residue at position 629 (serine 629) is a Phosphoserine. Lysine 695 carries the post-translational modification N6-acetyllysine. At serine 835 the chain carries Phosphoserine. 2 disordered regions span residues arginine 873–serine 902 and aspartate 915–asparagine 969. Composition is skewed to acidic residues over residues leucine 882 to serine 902 and aspartate 915 to proline 933. A phosphoserine mark is found at serine 959, serine 973, and serine 978. Residues isoleucine 1031–lysine 1054 form a disordered region.

This sequence belongs to the CBF/MAK21 family.

Its subcellular location is the nucleus. Its function is as follows. Stimulates transcription from the HSP70 promoter. The protein is CCAAT/enhancer-binding protein zeta (CEBPZ) of Homo sapiens (Human).